Here is a 182-residue protein sequence, read N- to C-terminus: Epoxyqueuosine reductase QueH (182 aa).

Residues cysteine 10, cysteine 11, cysteine 85, and cysteine 88 each coordinate [4Fe-4S] cluster. Cysteines 165 and 167 form a disulfide.

This sequence belongs to the QueH family.

The enzyme catalyses epoxyqueuosine(34) in tRNA + AH2 = queuosine(34) in tRNA + A + H2O. The protein operates within tRNA modification; tRNA-queuosine biosynthesis. Functionally, catalyzes the conversion of epoxyqueuosine (oQ) to queuosine (Q), which is a hypermodified base found in the wobble positions of tRNA(Asp), tRNA(Asn), tRNA(His) and tRNA(Tyr). The sequence is that of Epoxyqueuosine reductase QueH from Dehalococcoides mccartyi (strain ATCC BAA-2266 / KCTC 15142 / 195) (Dehalococcoides ethenogenes (strain 195)).